Here is a 308-residue protein sequence, read N- to C-terminus: MSAQKSGLHPRNRHQHRYDLAALCQTTPELTSFLIRTPAGEQSVDFANPQAVKALNKALLAHFYAVTHWDIPPGFLCPPVPGRADYIHHLADLLGETTGSIPAQATILDVGVGANCIYPLIGVHEYGWRFTGSEVSDAAMSSAQAIIQANTGLSRAIRLRRQKDPAAIFTGIIHKNEFYDATLCNPPFHDSAAAARAGSERKRRNLGQNKDDALNFGGQQQELWCEGGEVAFIKKMIAESQSFRRQVLWFTTLVSRGENLPPLYRALTEAGAVKVVKKEMAQGQKQSRFIAWTFMDDDQRRRFITRKR.

Belongs to the methyltransferase superfamily. METTL16/RlmF family.

The protein localises to the cytoplasm. The catalysed reaction is adenosine(1618) in 23S rRNA + S-adenosyl-L-methionine = N(6)-methyladenosine(1618) in 23S rRNA + S-adenosyl-L-homocysteine + H(+). Specifically methylates the adenine in position 1618 of 23S rRNA. In Salmonella schwarzengrund (strain CVM19633), this protein is Ribosomal RNA large subunit methyltransferase F.